We begin with the raw amino-acid sequence, 405 residues long: Potassium channel subfamily K member 13 (405 aa).

The Cytoplasmic segment spans residues 1-19 (MAGRGCGCSPGHLNEDNAR). The chain crosses the membrane as a helical span at residues 20 to 40 (FLLLAGLILLYLLGGAAVFSA). Asn-59 and Asn-65 each carry an N-linked (GlcNAc...) asparagine glycan. Residues 95–115 (WDFTGAFYFVGTVVSTIGFGM) constitute an intramembrane region (pore-forming). K(+) contacts are provided by Thr-110, Ile-111, and Gly-112. Residues 110–115 (TIGFGM) form a selectivity filter 1 region. Residues 125–145 (IFLIFYGLIGCASTILFFNLF) form a helical membrane-spanning segment. The Cytoplasmic portion of the chain corresponds to 146–193 (LERLITVIACVMRSCHQQQLRRRGAVTQDNMKAPEKGEADSLTGWKPS). A helical membrane pass occupies residues 194–214 (VYYVMLILCLASVAISCGASA). Positions 224–244 (YFDSVYFCFVAFSTIGFGDLV) form an intramembrane region, pore-forming. K(+) contacts are provided by Thr-237, Ile-238, Gly-239, and Phe-240. Residues 237 to 242 (TIGFGD) form a selectivity filter 2 region. A helical transmembrane segment spans residues 263–283 (FLILMGVCCIYSLFNVISILI). The Cytoplasmic segment spans residues 284-405 (KQTVNWILRK…NRLAETSGDR (122 aa)).

Belongs to the two pore domain potassium channel (TC 1.A.1.8) family. As to quaternary structure, homodimer. Heterodimer with KCNK12.

The protein localises to the cell membrane. It carries out the reaction K(+)(in) = K(+)(out). Functionally, k(+) channel that conducts outward rectifying tonic currents potentiated by purinergic signals. Homo- and heterodimerizes to form functional channels with distinct regulatory and gating properties. Contributes most of K(+) currents at the plasma membrane of resting microglia. Maintains a depolarized membrane potential required for proper ramified microglia morphology and phagocytosis, selectively mediating microglial pruning of presynaptic compartments at hippocampal excitatory synapses. Upon local release of ATP caused by neuronal injury or infection, it is potentiated by P2RY12 and P2RX7 receptor signaling and contributes to ATP-triggered K(+) efflux underlying microglial NLRP3 inflammasome assembly and IL1B release. The protein is Potassium channel subfamily K member 13 of Mus musculus (Mouse).